The chain runs to 342 residues: Apurinic-apyrimidinic endonuclease 1 (342 aa).

Zn(2+)-binding residues include His-61, Glu-136, Asp-170, His-173, His-207, Asp-220, His-222, and Glu-252. A compositionally biased stretch (basic and acidic residues) spans His-299 to Lys-310. The segment at His-299 to Glu-342 is disordered.

It belongs to the AP endonuclease 2 family. It depends on Zn(2+) as a cofactor.

It is found in the nucleus. In terms of biological role, DNA repair enzyme that cleaves apurinic/apyrimidinic (AP) sites and removes 3'-blocking groups present at single strand breaks of damaged DNA. Provides back-up AP endonuclease (APE) activity to apn2 together with uve1. The protein is Apurinic-apyrimidinic endonuclease 1 (apn1) of Schizosaccharomyces pombe (strain 972 / ATCC 24843) (Fission yeast).